Reading from the N-terminus, the 415-residue chain is tRNA (cytosine(38)-C(5))-methyltransferase (415 aa).

The SAM-dependent MTase C5-type domain occupies 4–396 (LRVLELYSGI…TVLCEGFGNA (393 aa)). Residues 13-15 (IGG), Asp-34, 57-58 (IE), and Ser-76 each bind S-adenosyl-L-methionine. Cys-79 is an active-site residue. Ser-376 provides a ligand contact to S-adenosyl-L-methionine.

Belongs to the class I-like SAM-binding methyltransferase superfamily. C5-methyltransferase family. As to expression, highly expressed in thymus, testis, and at much lower levels in spleen, lung, brain, heart, kidney, liver, skeletal muscle and embryonic stem cells.

The protein localises to the cytoplasm. It carries out the reaction cytidine(38) in tRNA + S-adenosyl-L-methionine = 5-methylcytidine(38) in tRNA + S-adenosyl-L-homocysteine + H(+). Functionally, specifically methylates cytosine 38 in the anticodon loop of tRNA(Asp). Has higher activity on tRNA(Asp) modified with queuosine at position 34. This is tRNA (cytosine(38)-C(5))-methyltransferase (Trdmt1) from Mus musculus (Mouse).